Here is a 713-residue protein sequence, read N- to C-terminus: Polyribonucleotide nucleotidyltransferase (713 aa).

Mg(2+)-binding residues include Asp491 and Asp497. Positions 558-617 constitute a KH domain; the sequence is PRMITIKINPEKIRDVIGKGGSVIRALTEETGTTIDISDDGVVTIASTSSDGMAEAKKRI. The S1 motif domain maps to 627 to 695; it reads GQVYEGTVLK…EKGRVRLSAK (69 aa).

This sequence belongs to the polyribonucleotide nucleotidyltransferase family. The cofactor is Mg(2+).

The protein resides in the cytoplasm. It catalyses the reaction RNA(n+1) + phosphate = RNA(n) + a ribonucleoside 5'-diphosphate. Involved in mRNA degradation. Catalyzes the phosphorolysis of single-stranded polyribonucleotides processively in the 3'- to 5'-direction. In Burkholderia cenocepacia (strain ATCC BAA-245 / DSM 16553 / LMG 16656 / NCTC 13227 / J2315 / CF5610) (Burkholderia cepacia (strain J2315)), this protein is Polyribonucleotide nucleotidyltransferase.